Consider the following 238-residue polypeptide: 7-cyano-7-deazaguanine synthase (238 aa).

10 to 20 (LSGGLDSSTVL) provides a ligand contact to ATP. Zn(2+)-binding residues include Cys190, Cys198, Cys201, and Cys204.

This sequence belongs to the QueC family. Zn(2+) serves as cofactor.

It carries out the reaction 7-carboxy-7-deazaguanine + NH4(+) + ATP = 7-cyano-7-deazaguanine + ADP + phosphate + H2O + H(+). It participates in purine metabolism; 7-cyano-7-deazaguanine biosynthesis. Its function is as follows. Catalyzes the ATP-dependent conversion of 7-carboxy-7-deazaguanine (CDG) to 7-cyano-7-deazaguanine (preQ(0)). This Thermoplasma acidophilum (strain ATCC 25905 / DSM 1728 / JCM 9062 / NBRC 15155 / AMRC-C165) protein is 7-cyano-7-deazaguanine synthase.